Here is a 246-residue protein sequence, read N- to C-terminus: Anamorsin homolog (246 aa).

The segment at 1–124 (MRVVVVDLDG…ARGTAFSLKS (124 aa)) is N-terminal SAM-like domain. The tract at residues 125–158 (RAVRVVTADAGWGADADVDDELIDESALLTELDV) is linker. Positions 168, 177, 180, and 182 each coordinate [2Fe-2S] cluster. Residues 168 to 182 (CDVGAGKKACKNCTC) form a fe-S binding site A region. [4Fe-4S] cluster-binding residues include cysteine 206, cysteine 209, cysteine 217, and cysteine 220. 2 short sequence motifs (cx2C motif) span residues 206–209 (CGNC) and 217–220 (CAGC). Positions 206 to 220 (CGNCALGDAFRCAGC) are fe-S binding site B.

Belongs to the anamorsin family. As to quaternary structure, monomer. [2Fe-2S] cluster serves as cofactor. It depends on [4Fe-4S] cluster as a cofactor.

The protein resides in the cytoplasm. Its subcellular location is the mitochondrion intermembrane space. In terms of biological role, component of the cytosolic iron-sulfur (Fe-S) protein assembly (CIA) machinery. Required for the maturation of extramitochondrial Fe-S proteins. Part of an electron transfer chain functioning in an early step of cytosolic Fe-S biogenesis, facilitating the de novo assembly of a [4Fe-4S] cluster on the cytosolic Fe-S scaffold complex. Electrons are transferred from NADPH via a FAD- and FMN-containing diflavin oxidoreductase. Together with the diflavin oxidoreductase, also required for the assembly of the diferric tyrosyl radical cofactor of ribonucleotide reductase (RNR), probably by providing electrons for reduction during radical cofactor maturation in the catalytic small subunit. This Ostreococcus tauri protein is Anamorsin homolog.